Consider the following 446-residue polypeptide: Exodeoxyribonuclease 7 large subunit (446 aa).

The protein belongs to the XseA family. Heterooligomer composed of large and small subunits.

The protein resides in the cytoplasm. It catalyses the reaction Exonucleolytic cleavage in either 5'- to 3'- or 3'- to 5'-direction to yield nucleoside 5'-phosphates.. Bidirectionally degrades single-stranded DNA into large acid-insoluble oligonucleotides, which are then degraded further into small acid-soluble oligonucleotides. The protein is Exodeoxyribonuclease 7 large subunit of Streptococcus gordonii (strain Challis / ATCC 35105 / BCRC 15272 / CH1 / DL1 / V288).